The chain runs to 118 residues: uncharacterized protein (118 aa).

The helical transmembrane segment at 7–27 (LLTGLFVGGIIGGAAVLLTAP) threads the bilayer. Residues 31 to 118 (KQLREKMKTN…IRQLEKTLQN (88 aa)) adopt a coiled-coil conformation.

The protein localises to the cell membrane. This is an uncharacterized protein from Bacillus subtilis (strain 168).